A 133-amino-acid chain; its full sequence is Ribonuclease P protein component (133 aa).

This sequence belongs to the RnpA family. Consists of a catalytic RNA component (M1 or rnpB) and a protein subunit.

It catalyses the reaction Endonucleolytic cleavage of RNA, removing 5'-extranucleotides from tRNA precursor.. Functionally, RNaseP catalyzes the removal of the 5'-leader sequence from pre-tRNA to produce the mature 5'-terminus. It can also cleave other RNA substrates such as 4.5S RNA. The protein component plays an auxiliary but essential role in vivo by binding to the 5'-leader sequence and broadening the substrate specificity of the ribozyme. This Synechococcus sp. (strain JA-2-3B'a(2-13)) (Cyanobacteria bacterium Yellowstone B-Prime) protein is Ribonuclease P protein component.